A 412-amino-acid chain; its full sequence is WW domain-containing oxidoreductase (412 aa).

Positions 1–24 are disordered; it reads MAALKYAGMEDTDSEDELPPGWEE. Residues 16 to 49 enclose the WW 1 domain; sequence DELPPGWEERSTKDGWVYYANHEEMKTQWEHPKT. Residues 50–55 carry the Nuclear localization signal motif; sequence GKKKRC. Residues 57–90 form the WW 2 domain; the sequence is GALPYGWEQETDDKGQIFYVDHINKRKTYFDPRQ. 128–134 provides a ligand contact to NADP(+); sequence GANSGIG. Residue Ser257 coordinates substrate. Tyr290 serves as the catalytic Proton acceptor.

It belongs to the short-chain dehydrogenases/reductases (SDR) family.

It is found in the cytoplasm. It localises to the mitochondrion. The protein localises to the golgi apparatus. The protein resides in the lysosome. In terms of biological role, putative oxidoreductase. Acts as a tumor suppressor and plays a role in apoptosis. May function synergistically with p53/TP53 to control genotoxic stress-induced cell death. Plays a role in TGFB1 signaling and TGFB1-mediated cell death. May also play a role in tumor necrosis factor (TNF)-mediated cell death. Required for normal bone development. Inhibits Wnt signaling. The protein is WW domain-containing oxidoreductase (wwox) of Danio rerio (Zebrafish).